The sequence spans 926 residues: Mating-type protein A-alpha Y3 (926 aa).

Positions 147 to 206 form a DNA-binding region, homeobox; sequence YKKPRPKFHSEYTPLLELYFHFNAYPTFADRRMLAEKTGMQTRQITVWFQNHRRRAKGPL. Disordered stretches follow at residues 238–281, 308–374, 424–452, and 625–734; these read SHLR…KVGK, QQAP…TSSA, GKGK…SRLN, and RARK…MNES. Composition is skewed to basic and acidic residues over residues 267-281 and 326-338; these read KKPD…KVGK and NAQD…ATKS. Polar residues predominate over residues 428 to 441; it reads PSQNLTSTPATFST. Residues 632–660 are compositionally biased toward basic and acidic residues; the sequence is KQAEKEARKEEKRARKEAKQAKKDRKEQR. 2 stretches are compositionally biased toward low complexity: residues 669 to 687 and 699 to 724; these read STLD…SATS and SSAS…SGTS.

The protein resides in the nucleus. Functionally, specifies A-alpha-3 mating-type. May regulate the expression of genes specific to the homokaryotic cell type. This Schizophyllum commune (Split gill fungus) protein is Mating-type protein A-alpha Y3.